Consider the following 150-residue polypeptide: T-complex protein 1 subunit beta (150 aa).

Aspartate 35 contacts Mg(2+). Glycine 36, threonine 37, threonine 38, and serine 39 together coordinate ADP. Residues glycine 36, threonine 37, and threonine 38 each coordinate ATP.

It belongs to the TCP-1 chaperonin family. In terms of assembly, component of the chaperonin-containing T-complex (TRiC), a hexadecamer composed of two identical back-to-back stacked rings enclosing a protein folding chamber. Each ring is made up of eight different subunits: TCP1/CCT1, CCT2, CCT3, CCT4, CCT5, CCT6A/CCT6, CCT7, CCT8. Interacts with PACRG. Interacts with FLCN. Interacts with DLEC1. Interacts with SVEP1.

It localises to the cytoplasm. It catalyses the reaction ATP + H2O = ADP + phosphate + H(+). In terms of biological role, component of the chaperonin-containing T-complex (TRiC), a molecular chaperone complex that assists the folding of actin, tubulin and other proteins upon ATP hydrolysis. The TRiC complex mediates the folding of WRAP53/TCAB1, thereby regulating telomere maintenance. As part of the TRiC complex may play a role in the assembly of BBSome, a complex involved in ciliogenesis regulating transports vesicles to the cilia. The chain is T-complex protein 1 subunit beta from Mesocricetus auratus (Golden hamster).